The following is a 280-amino-acid chain: B3 domain-containing protein At5g25470 (280 aa).

A DNA-binding region (TF-B3 1) is located at residues 20 to 114; the sequence is WKSLSPGQNW…FLEVQIFKND (95 aa). Residues 122 to 153 form a disordered region; it reads PPEVEPETEPFHPTTPKNSHKETTTASASASA. A DNA-binding region (TF-B3 2) is located at residues 183 to 276; it reads YFVKTLTKGN…ELVTAVRVHF (94 aa).

It is found in the nucleus. This is B3 domain-containing protein At5g25470 from Arabidopsis thaliana (Mouse-ear cress).